The primary structure comprises 147 residues: D-aminoacyl-tRNA deacylase (147 aa).

The short motif at Gly-136–Pro-137 is the Gly-cisPro motif, important for rejection of L-amino acids element.

This sequence belongs to the DTD family. As to quaternary structure, homodimer.

It is found in the cytoplasm. The catalysed reaction is glycyl-tRNA(Ala) + H2O = tRNA(Ala) + glycine + H(+). The enzyme catalyses a D-aminoacyl-tRNA + H2O = a tRNA + a D-alpha-amino acid + H(+). An aminoacyl-tRNA editing enzyme that deacylates mischarged D-aminoacyl-tRNAs. Also deacylates mischarged glycyl-tRNA(Ala), protecting cells against glycine mischarging by AlaRS. Acts via tRNA-based rather than protein-based catalysis; rejects L-amino acids rather than detecting D-amino acids in the active site. By recycling D-aminoacyl-tRNA to D-amino acids and free tRNA molecules, this enzyme counteracts the toxicity associated with the formation of D-aminoacyl-tRNA entities in vivo and helps enforce protein L-homochirality. This is D-aminoacyl-tRNA deacylase from Streptococcus pneumoniae (strain Taiwan19F-14).